Here is an 830-residue protein sequence, read N- to C-terminus: WD repeat-containing protein 75 (830 aa).

WD repeat units lie at residues 4–42, 46–85, 89–130, 144–183, 192–230, 236–275, 278–317, 323–361, and 375–422; these read EGVR…KVYS, EECV…KLWD, GILI…QLVS, RQLT…YFFK, LPST…RLWR, QKYT…VEWR, SEKN…TVIH, SAVI…QFYS, and QQEY…KLWN. Lysine 426 is covalently cross-linked (Glycyl lysine isopeptide (Lys-Gly) (interchain with G-Cter in SUMO2)). WD repeat units follow at residues 429-473, 486-524, 528-568, and 573-610; these read GFVL…KVWI, AWTC…TIWD, WELK…CCWN, and SIQW…FVFK. A phosphoserine mark is found at serine 663 and serine 671. A Glycyl lysine isopeptide (Lys-Gly) (interchain with G-Cter in SUMO2) cross-link involves residue lysine 675. The tract at residues 761-807 is disordered; the sequence is KSAEEVPDDVDMEGNKESDDSDEEYDLTEKDKETNNNTDLGEDAIHQ. Phosphoserine occurs at positions 778 and 781. Tyrosine 785 carries the phosphotyrosine modification. Residue serine 811 is modified to Phosphoserine.

In terms of assembly, component of the proposed t-UTP subcomplex of the ribosomal small subunit (SSU) processome. SSU processome is composed of more than 70 proteins and the RNA chaperone small nucleolar RNA (snoRNA) U3.

It localises to the nucleus. The protein localises to the nucleolus. In terms of biological role, ribosome biogenesis factor. Part of the small subunit (SSU) processome, first precursor of the small eukaryotic ribosomal subunit. During the assembly of the SSU processome in the nucleolus, many ribosome biogenesis factors, an RNA chaperone and ribosomal proteins associate with the nascent pre-rRNA and work in concert to generate RNA folding, modifications, rearrangements and cleavage as well as targeted degradation of pre-ribosomal RNA by the RNA exosome. Involved in nucleolar processing of pre-18S ribosomal RNA. Required for optimal pre-ribosomal RNA transcription by RNA polymerase I. The chain is WD repeat-containing protein 75 (Wdr75) from Mus musculus (Mouse).